We begin with the raw amino-acid sequence, 396 residues long: Gamma-D-glutamyl-L-diamino acid endopeptidase 1 (396 aa).

2 consecutive LysM domains span residues 1–45 (MDIL…RIQI) and 51–95 (TSYT…TIQV). Residues 108-394 (QNYDYSMMMN…EALGIFLAGL (287 aa)) enclose the Peptidase M14 domain. Histidine 162 and glutamate 165 together coordinate Zn(2+). Residue aspartate 255 participates in substrate binding. Histidine 307 contributes to the Zn(2+) binding site. The Proton donor role is filled by tyrosine 347. The active-site Proton donor/acceptor is glutamate 366.

The protein belongs to the peptidase M14 family. It depends on Zn(2+) as a cofactor.

The catalysed reaction is Hydrolysis of gamma-D-glutamyl bonds to the L-terminus (position 7) of meso-diaminopimelic acid (meso-A2pm) in 7-(L-Ala-gamma-D-Glu)-meso-A2pm and 7-(L-Ala-gamma-D-Glu)-7-(D-Ala)-meso-A2pm. It is required that the D-terminal amino and carboxy groups of meso-A2pm are unsubstituted.. Its function is as follows. An endopeptidase which hydrolyzes the gamma-D-Glu-(L)meso-diaminopimelic acid bond of L-Ala-gamma-D-Glu-(L)meso-diaminopimelic acid and L-Ala-gamma-D-Glu-(L)meso-diaminopimelic acid(L)-D-Ala peptides. It is active on spore cortex peptidoglycan. The polypeptide is Gamma-D-glutamyl-L-diamino acid endopeptidase 1 (Lysinibacillus sphaericus (Bacillus sphaericus)).